A 345-amino-acid polypeptide reads, in one-letter code: Ferritin-like-encapsulin shell fusion protein (345 aa).

A ferritin-like domain region spans residues 1-109 (MLSINPTLIN…INDNKKEESN (109 aa)). Fe cation contacts are provided by E31, E61, and H64. The interval 110-345 (VEYFEKLRSA…KNPEAIVVLE (236 aa)) is encapsulin domain.

It in the N-terminal section; belongs to the ferritin-like superfamily. This sequence in the C-terminal section; belongs to the encapsulin family. Family 1 subfamily. In terms of assembly, 180 monomers assemble into 12 pentamers and 20 hexamers which further assemble into an icosahedral particle about 36.6 nm in diameter. The N-terminal domain (residues 1-99) crystallizes as 3 decamers.

It is found in the encapsulin nanocompartment. It catalyses the reaction 4 Fe(2+) + O2 + 4 H(+) = 4 Fe(3+) + 2 H2O. Its activity is regulated as follows. The ferroxidase activity is inhibited by zinc. Functionally, fusion of the shell and cargo protein of a type 1 encapsulin nanocompartment. The nanocompartment is probably involved in iron storage. Expression in E.coli generates spherical particles (PfSPs) about 30 nm in diameter. The purified N-terminus has ferroxidase activity. The polypeptide is Ferritin-like-encapsulin shell fusion protein (Pyrococcus furiosus (strain ATCC 43587 / DSM 3638 / JCM 8422 / Vc1)).